The sequence spans 120 residues: NAD(P)H-quinone oxidoreductase subunit 3, chloroplastic (120 aa).

Helical transmembrane passes span 9–29, 64–84, and 88–108; these read IFWTFLIIASLIPILAFSISG, MFALVFVVFDVETVFLYPWAM, and VLGVSVFIEALIFVLILVVGL.

Belongs to the complex I subunit 3 family. In terms of assembly, NDH is composed of at least 16 different subunits, 5 of which are encoded in the nucleus.

Its subcellular location is the plastid. The protein localises to the chloroplast thylakoid membrane. The enzyme catalyses a plastoquinone + NADH + (n+1) H(+)(in) = a plastoquinol + NAD(+) + n H(+)(out). The catalysed reaction is a plastoquinone + NADPH + (n+1) H(+)(in) = a plastoquinol + NADP(+) + n H(+)(out). NDH shuttles electrons from NAD(P)H:plastoquinone, via FMN and iron-sulfur (Fe-S) centers, to quinones in the photosynthetic chain and possibly in a chloroplast respiratory chain. The immediate electron acceptor for the enzyme in this species is believed to be plastoquinone. Couples the redox reaction to proton translocation, and thus conserves the redox energy in a proton gradient. The chain is NAD(P)H-quinone oxidoreductase subunit 3, chloroplastic from Hordeum vulgare (Barley).